The chain runs to 199 residues: Peptidyl-tRNA hydrolase (199 aa).

Tyr-18 is a binding site for tRNA. The Proton acceptor role is filled by His-23. Positions 72, 74, and 120 each coordinate tRNA.

The protein belongs to the PTH family. Monomer.

It is found in the cytoplasm. The catalysed reaction is an N-acyl-L-alpha-aminoacyl-tRNA + H2O = an N-acyl-L-amino acid + a tRNA + H(+). In terms of biological role, hydrolyzes ribosome-free peptidyl-tRNAs (with 1 or more amino acids incorporated), which drop off the ribosome during protein synthesis, or as a result of ribosome stalling. Functionally, catalyzes the release of premature peptidyl moieties from peptidyl-tRNA molecules trapped in stalled 50S ribosomal subunits, and thus maintains levels of free tRNAs and 50S ribosomes. The sequence is that of Peptidyl-tRNA hydrolase from Bifidobacterium animalis subsp. lactis (strain AD011).